The chain runs to 397 residues: Elongation factor Tu (397 aa).

The tr-type G domain occupies Lys-10–Glu-206. The G1 stretch occupies residues Gly-19–Thr-26. Gly-19–Thr-26 lines the GTP pocket. Thr-26 is a Mg(2+) binding site. A G2 region spans residues Gly-60–Ser-64. Positions Asp-81 to Gly-84 are G3. Residues Asp-81–His-85 and Asn-136–Asp-139 contribute to the GTP site. The G4 stretch occupies residues Asn-136–Asp-139. The tract at residues Ser-174–Leu-176 is G5.

This sequence belongs to the TRAFAC class translation factor GTPase superfamily. Classic translation factor GTPase family. EF-Tu/EF-1A subfamily. As to quaternary structure, monomer.

It is found in the cytoplasm. It catalyses the reaction GTP + H2O = GDP + phosphate + H(+). Its function is as follows. GTP hydrolase that promotes the GTP-dependent binding of aminoacyl-tRNA to the A-site of ribosomes during protein biosynthesis. This chain is Elongation factor Tu, found in Clostridium tetani (strain Massachusetts / E88).